The primary structure comprises 544 residues: Pectinesterase 3 (544 aa).

3 N-linked (GlcNAc...) asparagine glycosylation sites follow: Asn-174, Asn-257, and Asn-291. Residues Thr-306 and Gln-336 each contribute to the substrate site. Asp-359 (proton donor) is an active-site residue. Catalysis depends on Asp-380, which acts as the Nucleophile. Residues Arg-448 and Trp-450 each contribute to the substrate site. N-linked (GlcNAc...) asparagine glycosylation is present at Asn-532.

It in the N-terminal section; belongs to the PMEI family. In the C-terminal section; belongs to the pectinesterase family.

The protein resides in the secreted. It is found in the cell wall. It catalyses the reaction [(1-&gt;4)-alpha-D-galacturonosyl methyl ester](n) + n H2O = [(1-&gt;4)-alpha-D-galacturonosyl](n) + n methanol + n H(+). Its pathway is glycan metabolism; pectin degradation; 2-dehydro-3-deoxy-D-gluconate from pectin: step 1/5. Functionally, acts in the modification of cell walls via demethylesterification of cell wall pectin. The sequence is that of Pectinesterase 3 (PME3) from Solanum lycopersicum (Tomato).